Here is a 430-residue protein sequence, read N- to C-terminus: Alpha-1,6-mannosyl-glycoprotein 2-beta-N-acetylglucosaminyltransferase (430 aa).

At 1–12 (MANLWKKQRLRD) the chain is on the cytoplasmic side. Residues 13–35 (TGLCRLGILFAVTLSIVLMLVSV) form a helical; Signal-anchor for type II membrane protein membrane-spanning segment. At 36 to 430 (PRTALNGSSI…YRYSSSSASP (395 aa)) the chain is on the lumenal side. 2 N-linked (GlcNAc...) asparagine glycosylation sites follow: N41 and N61. Substrate-binding positions include 104-108 (YVHNR) and D135. Cysteines 177 and 188 form a disulfide. Residue 205-209 (SLKHH) coordinates substrate. D237 lines the Mn(2+) pocket. A disulfide bridge connects residues C259 and C262. A glycan (N-linked (GlcNAc...) asparagine) is linked at N295. A disulfide bond links C310 and C414. Residue H345 coordinates Mn(2+).

The protein belongs to the glycosyltransferase 16 (GT16) protein family. Requires Mn(2+) as cofactor.

Its subcellular location is the golgi apparatus membrane. It catalyses the reaction an N(4)-{beta-D-GlcNAc-(1-&gt;2)-alpha-D-Man-(1-&gt;3)-[alpha-D-Man-(1-&gt;6)]-beta-D-Man-(1-&gt;4)-beta-D-GlcNAc-(1-&gt;4)-beta-D-GlcNAc}-L-asparaginyl-[protein] + UDP-N-acetyl-alpha-D-glucosamine = N(4)-{beta-D-GlcNAc-(1-&gt;2)-alpha-D-Man-(1-&gt;3)-[beta-D-GlcNAc-(1-&gt;2)-alpha-D-Man-(1-&gt;6)]-beta-D-Man-(1-&gt;4)-beta-D-GlcNAc-(1-&gt;4)-beta-D-GlcNAc}-L-asparaginyl-[protein] + UDP + H(+). It functions in the pathway protein modification; protein glycosylation. Its function is as follows. Catalyzes an essential step in the conversion of oligo-mannose and hybrid to complex N-glycans. This Arabidopsis thaliana (Mouse-ear cress) protein is Alpha-1,6-mannosyl-glycoprotein 2-beta-N-acetylglucosaminyltransferase.